We begin with the raw amino-acid sequence, 705 residues long: Effector protein hopD1 (705 aa).

Composition is skewed to polar residues over residues 1 to 11 (MNPLRSIQHNI) and 28 to 41 (QAQQ…SPSQ). 2 disordered regions span residues 1–41 (MNPL…SPSQ) and 173–207 (SSSL…DSGS). Positions 173–184 (SSSLETPLLSSP) are enriched in low complexity.

Its subcellular location is the secreted. Functionally, effector protein involved in non-host recognition. The sequence is that of Effector protein hopD1 (hopD1) from Pseudomonas syringae pv. tomato (strain ATCC BAA-871 / DC3000).